The chain runs to 223 residues: MAGDRNRHCELEQEKYDTHENVKIICLGDSAVGKSKLMERFLMDGFQPQQLSTYALTLYKHTATVDGKTILVDFWDTAGQERFQSMHASYYHKAHACIMVFDVQRKITYKNLGTWYAELREFRPEIPCILVANKIDADIQMTQKNFSFAKKFSLPLYFVSAADGTNVVKLFNDAIRLAVAYKESSQDFMDEVLQELENFKLEQKEEDTSGQEQSDTTKSPSPS.

GTP-binding positions include 28-35 (GDSAVGKS), 76-80 (DTAGQ), and 133-136 (NKID). Positions 200–223 (KLEQKEEDTSGQEQSDTTKSPSPS) are disordered. The span at 210 to 223 (GQEQSDTTKSPSPS) shows a compositional bias: polar residues.

It belongs to the small GTPase superfamily. Rab family. In terms of assembly, interacts with IFT27, IFT81, IFT172, ATP6V1E1, HK1, LDHC, MAPRE1 and HSPA2. In terms of tissue distribution, isoform 2 is expressed in the testis and localizes to the mid-piece of the sperm tail (at protein level). Isoform 2 is expressed at higher levels in testis than isoform 1. Isoform 1 and isoform 2 are widely expressed and notably within other tissues containing motile cilia including the lung, trachea, brain, ovary and kidney.

Its function is as follows. Plays an essential role in male fertility, sperm intra-flagellar transport, and tail assembly. Binds, in a GTP-regulated manner, to a specific set of effector proteins including key proteins involved in cilia development and function and delivers them into the growing sperm tail. The protein is Rab-like protein 2A (Rabl2) of Mus musculus (Mouse).